Reading from the N-terminus, the 37-residue chain is Large ribosomal subunit protein bL36c (37 aa).

It belongs to the bacterial ribosomal protein bL36 family.

It localises to the plastid. The protein localises to the chloroplast. This Cycas taitungensis (Prince sago) protein is Large ribosomal subunit protein bL36c.